Reading from the N-terminus, the 431-residue chain is Histidinol dehydrogenase (431 aa).

NAD(+)-binding residues include Y127, Q189, and N212. Substrate is bound by residues S237, Q259, and H262. Positions 259 and 262 each coordinate Zn(2+). Active-site proton acceptor residues include E326 and H327. Substrate is bound by residues H327, D360, E414, and H419. D360 is a Zn(2+) binding site. H419 is a binding site for Zn(2+).

It belongs to the histidinol dehydrogenase family. The cofactor is Zn(2+).

It catalyses the reaction L-histidinol + 2 NAD(+) + H2O = L-histidine + 2 NADH + 3 H(+). It participates in amino-acid biosynthesis; L-histidine biosynthesis; L-histidine from 5-phospho-alpha-D-ribose 1-diphosphate: step 9/9. Functionally, catalyzes the sequential NAD-dependent oxidations of L-histidinol to L-histidinaldehyde and then to L-histidine. The chain is Histidinol dehydrogenase from Xanthomonas euvesicatoria pv. vesicatoria (strain 85-10) (Xanthomonas campestris pv. vesicatoria).